Reading from the N-terminus, the 769-residue chain is Zinc finger protein 585B (769 aa).

Residues 1–12 are compositionally biased toward polar residues; the sequence is MPASWTSPQKSS. The tract at residues 1–23 is disordered; sequence MPASWTSPQKSSALAPDDHGSSY. In terms of domain architecture, KRAB spans 27-97; that stretch reads VSFRDVVINF…QGERPRHSCP (71 aa). 21 C2H2-type zinc fingers span residues 158 to 180, 186 to 208, 214 to 236, 242 to 264, 270 to 292, 298 to 320, 354 to 376, 382 to 404, 410 to 432, 438 to 460, 466 to 488, 494 to 516, 522 to 544, 550 to 572, 578 to 600, 606 to 628, 634 to 656, 662 to 684, 690 to 712, 718 to 740, and 746 to 768; these read YVCI…QKAH, YKCN…QRIH, YQCS…EKIH, HECT…QKIH, YICI…RRIH, YECN…QRIH, SICT…QRIH, YACS…QRIH, YVCM…QIIH, YKCG…KRIH, YVCN…QKTH, YICS…QRIH, YECN…QKIH, YECH…QKIH, YVCT…QRIH, YECS…QPLH, YVCA…QKTH, YICS…HRIH, YECS…QRIH, YVCA…QTTH, and YKCG…QGSH.

This sequence belongs to the krueppel C2H2-type zinc-finger protein family.

It is found in the nucleus. Functionally, may be involved in transcriptional regulation. In Pongo abelii (Sumatran orangutan), this protein is Zinc finger protein 585B (ZNF585B).